The chain runs to 869 residues: Bifunctional uridylyltransferase/uridylyl-removing enzyme (869 aa).

A uridylyltransferase region spans residues 1 to 331 (MPTNLPALPM…FPSESQVTRV (331 aa)). Residues 332–688 (INERFVERQG…ARISPAGEGL (357 aa)) are uridylyl-removing. The 123-residue stretch at 450-572 (VDQHILMVVR…VGDERHLTAL (123 aa)) folds into the HD domain. ACT domains lie at 689–773 (QVAV…PSQG) and 800–869 (LLSL…ALEI).

It belongs to the GlnD family. Mg(2+) serves as cofactor.

It catalyses the reaction [protein-PII]-L-tyrosine + UTP = [protein-PII]-uridylyl-L-tyrosine + diphosphate. The enzyme catalyses [protein-PII]-uridylyl-L-tyrosine + H2O = [protein-PII]-L-tyrosine + UMP + H(+). Uridylyltransferase (UTase) activity is inhibited by glutamine, while glutamine activates uridylyl-removing (UR) activity. Functionally, modifies, by uridylylation and deuridylylation, the PII regulatory proteins (GlnB and homologs), in response to the nitrogen status of the cell that GlnD senses through the glutamine level. Under low glutamine levels, catalyzes the conversion of the PII proteins and UTP to PII-UMP and PPi, while under higher glutamine levels, GlnD hydrolyzes PII-UMP to PII and UMP (deuridylylation). Thus, controls uridylylation state and activity of the PII proteins, and plays an important role in the regulation of nitrogen assimilation and metabolism. The chain is Bifunctional uridylyltransferase/uridylyl-removing enzyme from Cupriavidus pinatubonensis (strain JMP 134 / LMG 1197) (Cupriavidus necator (strain JMP 134)).